The following is a 312-amino-acid chain: Malate dehydrogenase (312 aa).

NAD(+)-binding positions include 7 to 13 (GAAGGIG) and D34. Substrate is bound by residues R81 and R87. Residues N94 and 117-119 (ITN) contribute to the NAD(+) site. Substrate-binding residues include N119 and R153. H177 acts as the Proton acceptor in catalysis. NAD(+) is bound at residue M227.

It belongs to the LDH/MDH superfamily. MDH type 1 family. As to quaternary structure, homodimer.

The enzyme catalyses (S)-malate + NAD(+) = oxaloacetate + NADH + H(+). Its function is as follows. Catalyzes the reversible oxidation of malate to oxaloacetate. The polypeptide is Malate dehydrogenase (Photobacterium profundum (strain SS9)).